A 397-amino-acid polypeptide reads, in one-letter code: MAPKRRPVPLIIAPTGEGQSTNIDAASEANLEALQRKLGELDLDEQQRKRLEAFLTQKAQVGELKDEDFDPICELGAGNGGVVHKVRHKPSRLVMARKLIHLEIKPAIRNQIIRELQVLHECNSPYIVGFYGAFYSDGEISICMEHMDGGSLDQVLKEARRIPEEILGKVSIAVLRGLVYLREKHQIMHRDVKPSNILVNSRGEIKLCDFGVSGQLIDSMANSFVGTRSYMSPERLQGTHYSVQSDVWSMGLSLVELAIGRFPIPPPDAKELEAIFGRPVLDKGGAEGHSMSPRQRPPGRPVSGHGMDSRPAMAIFELLDYIVNEPPPKLPHGVFTTDFEEFVMKCLMKNPADRADLKMLMGHTFIKRAEVEEVDFAGWMCKTMGLPQPSTPTHSAE.

The segment at 1–21 (MAPKRRPVPLIIAPTGEGQST) is disordered. The Protein kinase domain occupies 69–366 (FDPICELGAG…LKMLMGHTFI (298 aa)). Residues 75–83 (LGAGNGGVV) and K98 contribute to the ATP site. Catalysis depends on D191, which acts as the Proton acceptor. Phosphoserine; by RAF is present on residues S219 and S223. The interval 284 to 306 (GGAEGHSMSPRQRPPGRPVSGHG) is disordered.

It belongs to the protein kinase superfamily. STE Ser/Thr protein kinase family. MAP kinase kinase subfamily. In terms of processing, phosphorylation on Ser/Thr by MAP kinase kinase kinases (RAF) positively regulates the kinase activity.

It carries out the reaction L-seryl-[protein] + ATP = O-phospho-L-seryl-[protein] + ADP + H(+). The catalysed reaction is L-threonyl-[protein] + ATP = O-phospho-L-threonyl-[protein] + ADP + H(+). The enzyme catalyses L-tyrosyl-[protein] + ATP = O-phospho-L-tyrosyl-[protein] + ADP + H(+). Its function is as follows. Catalyzes the concomitant phosphorylation of a threonine and a tyrosine residue in a Thr-Glu-Tyr sequence located in MAP kinases. The polypeptide is Dual specificity mitogen-activated protein kinase kinase 2 (map2k2) (Cyprinus carpio (Common carp)).